We begin with the raw amino-acid sequence, 684 residues long: MTVPATDSCPAPIRVPAGTTAAAAVRDAGLPGRGAPDAVVVVRDASGTLRDLSWVPDTDAEVVPVAANTDEGRSVIRHSAAHVLAQAVQELFPQAKLGIGPPITDGFYYDFDVPEPFTPEDLDKLEKRMRQIVKEGQLFSRRVYESKEQARAELAGEPYKLELVDDKSGDPDIMEVGGDELTAYDNLNPRTRERVWGDLCRGPHIPTTRHIPAFKLTRSSAAYWRGDQNNASLQRIYGTAWESQEALDDHLRLIEEAQRRDHRKLGSELDLFSFPDEIGSGLAVFHPRGGVVRRELEEYSRRKHIEAGYEFVNTPHITKAQLFHTSGHLDWYADGMFPPMHLDAEYDDDGTVRKPGQDYYLKPMNCPMHTLIYRSRGRSYRELPLRLFEFGTVYRYEKSGVVHGLTRARGFTMDDSHIFCTREQLHGELASLLRFVLELLGDYGLTDFYLELSTKDPDKFVGSDEVWEQATTSLADVAAESGLELVPDPGGAAFYGPKISVQARDALGRSWQMSTIQVDFNFPERFELEYTASDGTRQRPVMIHRALFGSIERFFGILTEHYAGAFPAWLAPVQAVGIPVADEHVPYLESVAAQLKSYGVRVEVDASDDRMAKKIVHHTAQKVPFMLLAGDRDVAAGAVSFRFGDRTQINGVPRDSAVDAIVKWIADRENSVPSAELVKVSSGE.

The region spanning 1 to 66 (MTVPATDSCP…DTDAEVVPVA (66 aa)) is the TGS domain. The catalytic stretch occupies residues 261-567 (DHRKLGSELD…LTEHYAGAFP (307 aa)). 3 residues coordinate Zn(2+): C366, H417, and H544.

Belongs to the class-II aminoacyl-tRNA synthetase family. Homodimer. The cofactor is Zn(2+).

Its subcellular location is the cytoplasm. It carries out the reaction tRNA(Thr) + L-threonine + ATP = L-threonyl-tRNA(Thr) + AMP + diphosphate + H(+). Its function is as follows. Catalyzes the attachment of threonine to tRNA(Thr) in a two-step reaction: L-threonine is first activated by ATP to form Thr-AMP and then transferred to the acceptor end of tRNA(Thr). Also edits incorrectly charged L-seryl-tRNA(Thr). The chain is Threonine--tRNA ligase from Mycolicibacterium paratuberculosis (strain ATCC BAA-968 / K-10) (Mycobacterium paratuberculosis).